Reading from the N-terminus, the 271-residue chain is Tryptophan synthase alpha chain (271 aa).

Active-site proton acceptor residues include glutamate 49 and aspartate 60.

It belongs to the TrpA family. In terms of assembly, tetramer of two alpha and two beta chains.

It carries out the reaction (1S,2R)-1-C-(indol-3-yl)glycerol 3-phosphate + L-serine = D-glyceraldehyde 3-phosphate + L-tryptophan + H2O. It functions in the pathway amino-acid biosynthesis; L-tryptophan biosynthesis; L-tryptophan from chorismate: step 5/5. The alpha subunit is responsible for the aldol cleavage of indoleglycerol phosphate to indole and glyceraldehyde 3-phosphate. The protein is Tryptophan synthase alpha chain of Azoarcus sp. (strain BH72).